Consider the following 389-residue polypeptide: S-adenosylmethionine synthase (389 aa).

Residue His-15 participates in ATP binding. Asp-17 provides a ligand contact to Mg(2+). Glu-43 is a K(+) binding site. Residues Glu-56 and Gln-99 each contribute to the L-methionine site. The tract at residues 99-109 is flexible loop; the sequence is QSSDIQYSIDH. ATP is bound by residues 166 to 168, 232 to 233, Asp-241, 247 to 248, Ser-264, and Lys-268; these read DAK, RF, and RK. An L-methionine-binding site is contributed by Asp-241. L-methionine is bound at residue Lys-272.

Belongs to the AdoMet synthase family. In terms of assembly, homotetramer; dimer of dimers. Requires Mg(2+) as cofactor. The cofactor is K(+).

The protein localises to the cytoplasm. It carries out the reaction L-methionine + ATP + H2O = S-adenosyl-L-methionine + phosphate + diphosphate. It functions in the pathway amino-acid biosynthesis; S-adenosyl-L-methionine biosynthesis; S-adenosyl-L-methionine from L-methionine: step 1/1. Its function is as follows. Catalyzes the formation of S-adenosylmethionine (AdoMet) from methionine and ATP. The overall synthetic reaction is composed of two sequential steps, AdoMet formation and the subsequent tripolyphosphate hydrolysis which occurs prior to release of AdoMet from the enzyme. The sequence is that of S-adenosylmethionine synthase from Blochmanniella pennsylvanica (strain BPEN).